Here is a 295-residue protein sequence, read N- to C-terminus: MSASESEIQARLLAQALPYMQRYENKTIVVKYGGHAMGNPELGRAFASDIALLKQSGVNPIVVHGGGPQIGAMLNKMGIESKFEGGLRVTDEKTVEIVEMVLAGSINKEIVALINQTGEWAIGLCGKDGNMVFAEKARKTIKDPDSNIERILDLGFVGEVVEVDRTLLDLLARSEMIPVIAPVAPGRDGHTYNINADTFAGAIAGALNATRLLFLTDVPGVLDKQGNLIKELSVAQAHALIADGTISGGMIPKVETCMEAIKAGVQGVVILNGKTAHSVLLEIFTERGAGTLIVP.

Substrate contacts are provided by residues 66–67, R88, and N193; that span reads GG.

Belongs to the acetylglutamate kinase family. ArgB subfamily.

It is found in the cytoplasm. It catalyses the reaction N-acetyl-L-glutamate + ATP = N-acetyl-L-glutamyl 5-phosphate + ADP. The protein operates within amino-acid biosynthesis; L-arginine biosynthesis; N(2)-acetyl-L-ornithine from L-glutamate: step 2/4. Its function is as follows. Catalyzes the ATP-dependent phosphorylation of N-acetyl-L-glutamate. The sequence is that of Acetylglutamate kinase from Sinorhizobium fredii (strain NBRC 101917 / NGR234).